The chain runs to 766 residues: Ubiquitin carboxyl-terminal hydrolase creB (766 aa).

Positions 1–32 (MGSFLKSFRKDVGSAAPSVGAPPAKKEPQPLP) are disordered. Residues 13-23 (GSAAPSVGAPP) show a composition bias toward low complexity. The USP domain maps to 55–466 (YGMENFGNTC…CAYVLFYQET (412 aa)). Cys64 (nucleophile) is an active-site residue. Disordered stretches follow at residues 115–145 (EALA…KDSP) and 243–266 (ESPQ…SRTP). The span at 249-263 (SDVSDSVIPSSSSGS) shows a compositional bias: low complexity. His417 serves as the catalytic Proton acceptor. The tract at residues 526 to 752 (APTAPQLSTH…HDRSSHGKWR (227 aa)) is disordered. The span at 548-572 (SPAPDPAPLTSLPPIPPIPETPPAP) shows a compositional bias: pro residues. The stretch at 573–620 (LTSRKSDLQSKKERVKEEKERKAAEKEKEKQRRKEIETRLKDRQRRED) forms a coiled coil. Basic and acidic residues-rich tracts occupy residues 576–643 (RKSD…RNHA) and 734–747 (EQEH…DRSS).

The protein belongs to the peptidase C19 family. As to quaternary structure, interacts with creA, creC and qutD.

It carries out the reaction Thiol-dependent hydrolysis of ester, thioester, amide, peptide and isopeptide bonds formed by the C-terminal Gly of ubiquitin (a 76-residue protein attached to proteins as an intracellular targeting signal).. Its function is as follows. Ubiquitin thioesterase component of the regulatory network controlling carbon source utilization through ubiquitination and deubiquitination involving creA, creB, creC, creD and acrB. Deubiquitinates the creA catabolic repressor and the quinate permease qutD. Also plays a role in response to carbon starvation and the control of extracellular proteases activity. The chain is Ubiquitin carboxyl-terminal hydrolase creB (creB) from Emericella nidulans (strain FGSC A4 / ATCC 38163 / CBS 112.46 / NRRL 194 / M139) (Aspergillus nidulans).